The primary structure comprises 1052 residues: Membrane-bound transcription factor site-1 protease (1052 aa).

The signal sequence occupies residues 1–17; sequence MKLVNIWLLLLVVLLCG. Residues 18–186 constitute a propeptide that is removed on maturation; sequence KKHLGDRLEK…TGRHSSRRLL (169 aa). Ser168 is subject to Phosphoserine; by FAM20C. At 187 to 998 the chain is on the lumenal side; it reads RAIPRQVAQT…IMPGRYNQEV (812 aa). The Peptidase S8 domain maps to 190–472; that stretch reads PRQVAQTLQA…HGKLDLLRAY (283 aa). The Charge relay system role is filled by Asp218. N-linked (GlcNAc...) asparagine glycosylation is present at Asn236. The active-site Charge relay system is His249. Asn305 is a glycosylation site (N-linked (GlcNAc...) asparagine). The active-site Charge relay system is Ser414. N-linked (GlcNAc...) asparagine glycosylation is found at Asn515 and Asn728. Residues 877 to 887 show a composition bias toward polar residues; it reads PSLSHSGNRQR. A disordered region spans residues 877 to 899; the sequence is PSLSHSGNRQRPPSGAGSVTPER. Asn939 is a glycosylation site (N-linked (GlcNAc...) asparagine). A helical transmembrane segment spans residues 999–1021; it reads GQTIPVFAFLGAMVVLAFFVVQI. At 1022–1052 the chain is on the cytoplasmic side; the sequence is NKAKSRPKRRKPRVKRPQLMQQVHPPKTPSV. Residues 1027–1037 are compositionally biased toward basic residues; it reads RPKRRKPRVKR. The interval 1027-1052 is disordered; it reads RPKRRKPRVKRPQLMQQVHPPKTPSV.

The protein belongs to the peptidase S8 family. In terms of assembly, interacts with LYSET; this interaction bridges GNPTAB to MBTPS1. Ca(2+) serves as cofactor. The 148 kDa zymogen is processed progressively into two membrane-bound 120 and 106 kDa forms in the endoplasmic reticulum, and late into a secreted 98 kDa form. The propeptide is autocatalytically removed through an intramolecular cleavage after Leu-186. Further cleavage generates 14, 10, and 8 kDa intermediates. As to expression, widely expressed.

Its subcellular location is the endoplasmic reticulum membrane. It localises to the golgi apparatus membrane. The enzyme catalyses Processes precursors containing basic and hydrophobic/aliphatic residues at P4 and P2, respectively, with a relatively relaxed acceptance of amino acids at P1 and P3.. With respect to regulation, inhibited by divalent copper and zinc ions, but not by nickel or cobalt. Inhibited by its prosegment, but not smaller fragments. Inhibited by 4-(2-aminoethyl)benzenesulfonyl fluoride (AEBSF), a serine protease inhibitor. In terms of biological role, serine protease that cleaves after hydrophobic or small residues, provided that Arg or Lys is in position P4: known substrates include SREBF1/SREBP1, SREBF2/SREBP2, BDNF, GNPTAB, ATF6, ATF6B and FAM20C. Cleaves substrates after Arg-Ser-Val-Leu (SREBP2), Arg-His-Leu-Leu (ATF6), Arg-Gly-Leu-Thr (BDNF) and its own propeptide after Arg-Arg-Leu-Leu. Catalyzes the first step in the proteolytic activation of the sterol regulatory element-binding proteins (SREBPs) SREBF1/SREBP1 and SREBF2/SREBP2. Also mediates the first step in the proteolytic activation of the cyclic AMP-dependent transcription factor ATF-6 (ATF6 and ATF6B). Mediates the protein cleavage of GNPTAB into subunit alpha and beta, thereby participating in biogenesis of lysosomes. Cleaves the propeptide from FAM20C which is required for FAM20C secretion from the Golgi apparatus membrane and for enhancement of FAM20C kinase activity, promoting osteoblast differentiation and biomineralization. Involved in the regulation of M6P-dependent Golgi-to-lysosome trafficking of lysosomal enzymes. It is required for the activation of CREB3L2/BBF2H7, a transcriptional activator of MIA3/TANGO and other genes controlling mega vesicle formation. Therefore, it plays a key role in the regulation of mega vesicle-mediated collagen trafficking. In astrocytes and osteoblasts, upon DNA damage and ER stress, mediates the first step of the regulated intramembrane proteolytic activation of the transcription factor CREB3L1, leading to the inhibition of cell-cycle progression. The sequence is that of Membrane-bound transcription factor site-1 protease from Homo sapiens (Human).